Reading from the N-terminus, the 300-residue chain is Glutamyl-Q tRNA(Asp) synthetase (300 aa).

L-glutamate is bound by residues 14-18 (RFAPT) and Glu50. Residues 17–27 (PTPSGFLHFGS) carry the 'HIGH' region motif. Positions 106, 108, 120, and 124 each coordinate Zn(2+). The L-glutamate site is built by Tyr177 and Arg195. Residues 233–237 (KLGKS) carry the 'KMSKS' region motif. Lys236 is a binding site for ATP.

It belongs to the class-I aminoacyl-tRNA synthetase family. GluQ subfamily. Zn(2+) is required as a cofactor.

Functionally, catalyzes the tRNA-independent activation of glutamate in presence of ATP and the subsequent transfer of glutamate onto a tRNA(Asp). Glutamate is transferred on the 2-amino-5-(4,5-dihydroxy-2-cyclopenten-1-yl) moiety of the queuosine in the wobble position of the QUC anticodon. In Pseudomonas putida (strain ATCC 700007 / DSM 6899 / JCM 31910 / BCRC 17059 / LMG 24140 / F1), this protein is Glutamyl-Q tRNA(Asp) synthetase.